We begin with the raw amino-acid sequence, 272 residues long: D-aminoacyl-tRNA deacylase (272 aa).

Monomer. It depends on Zn(2+) as a cofactor.

It catalyses the reaction a D-aminoacyl-tRNA + H2O = a tRNA + a D-alpha-amino acid + H(+). It carries out the reaction glycyl-tRNA(Ala) + H2O = tRNA(Ala) + glycine + H(+). The enzyme catalyses D-tyrosyl-tRNA(Tyr) + H2O = D-tyrosine + tRNA(Tyr). In terms of biological role, D-aminoacyl-tRNA deacylase with broad substrate specificity. By recycling D-aminoacyl-tRNA to D-amino acids and free tRNA molecules, this enzyme counteracts the toxicity associated with the formation of D-aminoacyl-tRNA entities in vivo. Catalyzes the hydrolysis of D-tyrosyl-tRNA(Tyr) and D-aspartyl-tRNA(Asp). In Pyrococcus abyssi (strain GE5 / Orsay), this protein is D-aminoacyl-tRNA deacylase.